The following is a 796-amino-acid chain: Leucine--tRNA ligase (796 aa).

Residues 40 to 51 (PYPSASGLHVGH) carry the 'HIGH' region motif. Residues 569-573 (KMSKS) carry the 'KMSKS' region motif. ATP is bound at residue Lys-572.

It belongs to the class-I aminoacyl-tRNA synthetase family.

It is found in the cytoplasm. The catalysed reaction is tRNA(Leu) + L-leucine + ATP = L-leucyl-tRNA(Leu) + AMP + diphosphate. The sequence is that of Leucine--tRNA ligase from Bdellovibrio bacteriovorus (strain ATCC 15356 / DSM 50701 / NCIMB 9529 / HD100).